The chain runs to 666 residues: MQDFFGSVRRSLVFRPSSDDDNQENQPPFPGVLADKITSCIRKSKIFIKPSFSPPPPANTVDMAPPISWRKGQLIGRGAFGTVYMGMNLDSGELLAVKQVLIAANFASKEKTQAHIQELEEEVKLLKNLSHPNIVRYLGTVREDDTLNILLEFVPGGSISSLLEKFGPFPESVVRTYTRQLLLGLEYLHNHAIMHRDIKGANILVDNKGCIKLADFGASKQVAELATMTGAKSMKGTPYWMAPEVILQTGHSFSADIWSVGCTVIEMVTGKAPWSQQYKEVAAIFFIGTTKSHPPIPDTLSSDAKDFLLKCLQEVPNLRPTASELLKHPFVMGKHKESASTDLGSVLNNLSTPLPLQINNTKSTPDSTCDDVGDMCNFGSLNYSLVDPVKSIQNKNLWQQNDNGGDEDDMCLIDDENFLTFDGEMSSTLEKDCHLKKSCDDISDMSIALKSKFDESPGNGEKESTMSMECDQPSYSEDDDELTESKIKAFLDEKAADLKKLQTPLYEEFYNSLITFSPSCMESNLSNSKREDTARGFLKLPPKSRSPSRGPLGGSPSRATDATSCSKSPGSGGSRELNINNGGDEASQDGVSARVTDWRGLVVDTKQELSQCVALSEIEKKWKEELDQELERKRQEIMRQAGLGSSPRDRGMSRQREKSRFASPGK.

One can recognise a Protein kinase domain in the interval 69 to 331 (WRKGQLIGRG…ASELLKHPFV (263 aa)). ATP contacts are provided by residues 75-83 (IGRGAFGTV) and lysine 98. Residues 101–131 (LIAANFASKEKTQAHIQELEEEVKLLKNLSH) adopt a coiled-coil conformation. Residues lysine 109 and lysine 111 each participate in a glycyl lysine isopeptide (Lys-Gly) (interchain with G-Cter in ubiquitin) cross-link. The active-site Proton acceptor is the aspartate 197. Positions 452-464 (KFDESPGNGEKES) are enriched in basic and acidic residues. Disordered stretches follow at residues 452–481 (KFDE…DDDE), 536–592 (GFLK…DGVS), and 635–666 (QEIM…SPGK). Residues 538-558 (LKLPPKSRSPSRGPLGGSPSR) are compositionally biased toward low complexity. The span at 560–569 (TDATSCSKSP) shows a compositional bias: polar residues. A coiled-coil region spans residues 620 to 643 (KKWKEELDQELERKRQEIMRQAGL). Residues 647-660 (PRDRGMSRQREKSR) show a composition bias toward basic and acidic residues.

Belongs to the protein kinase superfamily. STE Ser/Thr protein kinase family. MAP kinase kinase kinase subfamily. As to expression, expressed in roots, inflorescence stems, flower buds and flowers. Low amount in rosette and cauline leaves.

The enzyme catalyses L-seryl-[protein] + ATP = O-phospho-L-seryl-[protein] + ADP + H(+). It carries out the reaction L-threonyl-[protein] + ATP = O-phospho-L-threonyl-[protein] + ADP + H(+). May be involved in an oxidative stress-mediated signaling cascade that phosphorylates downstream MAP kinases MPK3 and MPK6. May suppress auxin signaling that promotes cell cycle. Functionally redundant to ANP2 and ANP3 in the positive regulation of cytokinesis. The polypeptide is Mitogen-activated protein kinase kinase kinase ANP1 (ANP1) (Arabidopsis thaliana (Mouse-ear cress)).